A 91-amino-acid chain; its full sequence is Small ribosomal subunit protein uS19 (91 aa).

Belongs to the universal ribosomal protein uS19 family.

Functionally, protein S19 forms a complex with S13 that binds strongly to the 16S ribosomal RNA. This Metamycoplasma arthritidis (strain 158L3-1) (Mycoplasma arthritidis) protein is Small ribosomal subunit protein uS19.